The sequence spans 23 residues: Paralytic peptide 1 (23 aa).

An intrachain disulfide couples Cys7 to Cys19.

The protein belongs to the GBP/PSP1/paralytic peptide family. As to expression, hemolymph.

Functionally, causes rapid, rigid paralysis when injected into Lepidopteran larvae. The physiological role may be to reduce hemolymph loss following injury and promote wound healing. The polypeptide is Paralytic peptide 1 (Manduca sexta (Tobacco hawkmoth)).